The sequence spans 160 residues: SsrA-binding protein (160 aa).

The protein belongs to the SmpB family.

The protein localises to the cytoplasm. Functionally, required for rescue of stalled ribosomes mediated by trans-translation. Binds to transfer-messenger RNA (tmRNA), required for stable association of tmRNA with ribosomes. tmRNA and SmpB together mimic tRNA shape, replacing the anticodon stem-loop with SmpB. tmRNA is encoded by the ssrA gene; the 2 termini fold to resemble tRNA(Ala) and it encodes a 'tag peptide', a short internal open reading frame. During trans-translation Ala-aminoacylated tmRNA acts like a tRNA, entering the A-site of stalled ribosomes, displacing the stalled mRNA. The ribosome then switches to translate the ORF on the tmRNA; the nascent peptide is terminated with the 'tag peptide' encoded by the tmRNA and targeted for degradation. The ribosome is freed to recommence translation, which seems to be the essential function of trans-translation. This is SsrA-binding protein from Histophilus somni (strain 129Pt) (Haemophilus somnus).